The chain runs to 89 residues: Small ribosomal subunit protein uS15 (89 aa).

It belongs to the universal ribosomal protein uS15 family. Part of the 30S ribosomal subunit. Forms a bridge to the 50S subunit in the 70S ribosome, contacting the 23S rRNA.

Its function is as follows. One of the primary rRNA binding proteins, it binds directly to 16S rRNA where it helps nucleate assembly of the platform of the 30S subunit by binding and bridging several RNA helices of the 16S rRNA. In terms of biological role, forms an intersubunit bridge (bridge B4) with the 23S rRNA of the 50S subunit in the ribosome. The polypeptide is Small ribosomal subunit protein uS15 (Chlorobium phaeovibrioides (strain DSM 265 / 1930) (Prosthecochloris vibrioformis (strain DSM 265))).